The chain runs to 182 residues: Dual-action ribosomal maturation protein DarP (182 aa).

The protein belongs to the DarP family.

It localises to the cytoplasm. Member of a network of 50S ribosomal subunit biogenesis factors which assembles along the 30S-50S interface, preventing incorrect 23S rRNA structures from forming. Promotes peptidyl transferase center (PTC) maturation. This is Dual-action ribosomal maturation protein DarP from Yersinia pestis.